Reading from the N-terminus, the 65-residue chain is Hainantoxin-X (65 aa).

A signal peptide spans 1–20 (MNMKILVLVAVLCLVVSTHA). The propeptide occupies 21 to 37 (ERHSKTDMEDSPMIQER). 3 cysteine pairs are disulfide-bonded: Cys39–Cys56, Cys46–Cys59, and Cys55–Cys64.

It belongs to the neurotoxin 36 family. 02 subfamily. Expressed by the venom gland.

It is found in the secreted. In terms of biological role, reversibly blocks N-type calcium channels (Cav2.2/CACNA1B) in rat dorsal root ganglion cells. Elicits no toxic symptoms in either vertebrates or invertebrates during a period of 48 hours post-injection, when it was assayed in vivo by direct injection into mice and cockroaches. The polypeptide is Hainantoxin-X (Cyriopagopus hainanus (Chinese bird spider)).